Reading from the N-terminus, the 188-residue chain is uncharacterized protein (188 aa).

Residues 62 to 77 (ITGEKPLIKLNESTEK) carry the L5-specific motif motif.

The protein resides in the mitochondrion. This is an uncharacterized protein from Dictyostelium discoideum (Social amoeba).